The chain runs to 237 residues: B3 domain-containing protein Os03g0184500 (237 aa).

The TF-B3 DNA-binding region spans 137-228 (FVKPMLHSHV…TFKVHIIRAT (92 aa)).

It localises to the nucleus. In Oryza sativa subsp. japonica (Rice), this protein is B3 domain-containing protein Os03g0184500.